A 267-amino-acid chain; its full sequence is Tryptophan synthase alpha chain (267 aa).

Catalysis depends on proton acceptor residues Glu-43 and Asp-54.

The protein belongs to the TrpA family. Tetramer of two alpha and two beta chains.

It catalyses the reaction (1S,2R)-1-C-(indol-3-yl)glycerol 3-phosphate + L-serine = D-glyceraldehyde 3-phosphate + L-tryptophan + H2O. The protein operates within amino-acid biosynthesis; L-tryptophan biosynthesis; L-tryptophan from chorismate: step 5/5. In terms of biological role, the alpha subunit is responsible for the aldol cleavage of indoleglycerol phosphate to indole and glyceraldehyde 3-phosphate. In Bacillus subtilis subsp. natto, this protein is Tryptophan synthase alpha chain.